A 578-amino-acid polypeptide reads, in one-letter code: Sulfite reductase [NADPH] hemoprotein beta-component (578 aa).

The span at methionine 1 to glutamate 11 shows a compositional bias: polar residues. The disordered stretch occupies residues methionine 1–leucine 20. [4Fe-4S] cluster contacts are provided by cysteine 441, cysteine 447, cysteine 487, and cysteine 491. Residue cysteine 491 coordinates siroheme.

This sequence belongs to the nitrite and sulfite reductase 4Fe-4S domain family. As to quaternary structure, alpha(8)-beta(8). The alpha component is a flavoprotein, the beta component is a hemoprotein. Siroheme serves as cofactor. It depends on [4Fe-4S] cluster as a cofactor.

It carries out the reaction hydrogen sulfide + 3 NADP(+) + 3 H2O = sulfite + 3 NADPH + 4 H(+). The protein operates within sulfur metabolism; hydrogen sulfide biosynthesis; hydrogen sulfide from sulfite (NADPH route): step 1/1. Functionally, component of the sulfite reductase complex that catalyzes the 6-electron reduction of sulfite to sulfide. This is one of several activities required for the biosynthesis of L-cysteine from sulfate. In Vibrio campbellii (strain ATCC BAA-1116), this protein is Sulfite reductase [NADPH] hemoprotein beta-component.